The primary structure comprises 705 residues: Calpain-1 catalytic subunit (705 aa).

Positions 48–347 constitute a Calpain catalytic domain; sequence LFRDPQFPAG…FSRLEICNLT (300 aa). Catalysis depends on residues C108, H265, and N289. Residues 348-517 are domain III; the sequence is PDALTKDELS…KQSDTAELDE (170 aa). The tract at residues 518–533 is linker; the sequence is EISADLADEEEITEDD. One can recognise an EF-hand 1 domain in the interval 530–565; that stretch reads TEDDIEDGFKNMFQQLAGEDMEISVFELKTILNRVI. Residues 534 to 704 are domain IV; the sequence is IEDGFKNMFQ…LAEWLLLTMC (171 aa). Ca(2+)-binding residues include D549, E551, E556, D589, D591, S593, R595, E600, D619, D621, S623, T625, and E630. 2 consecutive EF-hand domains span residues 606 to 641 and 671 to 705; these read NKIR…AGFK and VKLE…TMCG.

The protein belongs to the peptidase C2 family. In terms of assembly, heterodimer of large (catalytic) and a small (regulatory) subunit. The cofactor is Ca(2+). In terms of processing, the N-terminus is blocked. As to expression, ubiquitously expressed.

It localises to the cytoplasm. The protein localises to the cell membrane. The enzyme catalyses Broad endopeptidase specificity.. Activated by micromolar concentrations of calcium and inhibited by calpastatin. In terms of biological role, calcium-regulated non-lysosomal thiol-protease which catalyze limited proteolysis of substrates involved in cytoskeletal remodeling and signal transduction. This Gallus gallus (Chicken) protein is Calpain-1 catalytic subunit.